The following is a 1314-amino-acid chain: AT-rich interactive domain-containing protein 4B (1314 aa).

Disordered regions lie at residues 123 to 169 (LPLT…RKQT) and 266 to 306 (KTEL…EPFP). Residues Ser-276, Ser-295, and Ser-296 each carry the phosphoserine modification. Residues 277–305 (EAEEEEEEEDDEKEKEDNSSEEEEEIEPF) show a composition bias toward acidic residues. The 93-residue stretch at 306–398 (PEERENFLQQ…YLYGFEEYCR (93 aa)) folds into the ARID domain. Residues Lys-428 and Lys-461 each participate in a glycyl lysine isopeptide (Lys-Gly) (interchain with G-Cter in SUMO2) cross-link. A compositionally biased stretch (basic and acidic residues) spans 439 to 464 (NVEDSKNVMPKEETPAEDESERKENI). Disordered regions lie at residues 439 to 577 (NVED…KVQV), 635 to 678 (IKHR…SPEM), 709 to 888 (ASES…EEKR), 943 to 1215 (KELF…RLPK), and 1256 to 1290 (VASI…SITA). Ser-482 carries the phosphoserine modification. Positions 486–511 (KEAHITKLEENENLEDKDGGRARTEE) are enriched in basic and acidic residues. Residues 531-567 (NKEEDEDDEEIEEEEEEDEEEDEDEDDDDNNEEEEFE) show a composition bias toward acidic residues. The 53-residue stretch at 572 to 624 (GMKVQVRYGRGKNQKMYEASIKDSDVEGGEALYLVHYCGWNVRYDEWIKADKI) folds into the Tudor-knot domain. Residues 643 to 656 (NKLDKEKDRDEKYS) are compositionally biased toward basic and acidic residues. Residues Ser-666, Ser-668, Ser-675, and Ser-717 each carry the phosphoserine modification. Basic and acidic residues-rich tracts occupy residues 722–754 (ERCT…KEEQ) and 778–787 (SPERLRKDME). Lys-751 participates in a covalent cross-link: Glycyl lysine isopeptide (Lys-Gly) (interchain with G-Cter in SUMO2). Ser-778 and Ser-790 each carry phosphoserine. A compositionally biased stretch (acidic residues) spans 788–800 (AISEDTDFEEEDE). A Phosphothreonine modification is found at Thr-793. 3 stretches are compositionally biased toward basic and acidic residues: residues 808–817 (VKKDTTDKAL), 841–853 (GKKE…KEPL), and 997–1012 (KPIE…RKTE). Polar residues predominate over residues 1013 to 1023 (FPSSGSNSVLN). Ser-1016 bears the Phosphoserine mark. At Thr-1028 the chain carries Phosphothreonine. The segment covering 1030–1051 (ESPSSVTITEASQQQSSVTVSV) has biased composition (low complexity). The residue at position 1031 (Ser-1031) is a Phosphoserine. Residues 1058-1067 (EEVRSIKSET) are compositionally biased toward basic and acidic residues. Positions 1089-1103 (SSPAGFDASVSSSSS) are enriched in low complexity. The span at 1132–1150 (KKQKRSHKATVVNNKKKGK) shows a compositional bias: basic residues. The residue at position 1152 (Thr-1152) is a Phosphothreonine. A phosphoserine mark is found at Ser-1154, Ser-1155, Ser-1157, and Ser-1161. A compositionally biased stretch (polar residues) spans 1164 to 1186 (ESVTKTQTIKSVPTGMKTHNSKS). A compositionally biased stretch (basic and acidic residues) spans 1198-1210 (RNGDKDPDLKEPS). Residues 1227-1272 (ENMTSAERISILQEKLQEIRKHYLSLKSEVASIDRRRKRLKKKERE) are a coiled coil. Over residues 1274 to 1290 (AATSSSSSSPSSSSITA) the composition is skewed to low complexity.

Component of a Sin3A corepressor complex consisting of SIN3A, SAP130, SUDS3/SAP45, SAP180, HDAC1 and HDAC2. Interacts with ARID4A. Interacts with AR. In terms of tissue distribution, expressed in Sertoli cells of the testis.

It localises to the nucleus. Acts as a transcriptional repressor. May function in the assembly and/or enzymatic activity of the Sin3A corepressor complex or in mediating interactions between the complex and other regulatory complexes. Plays a role in the regulation of epigenetic modifications at the PWS/AS imprinting center near the SNRPN promoter, where it might function as part of a complex with RB1 and ARID4A. Involved in spermatogenesis, together with ARID4A, where it functions as a transcriptional coactivator for AR (androgen receptor) and enhances expression of genes required for sperm maturation. Regulates expression of the tight junction protein CLDN3 in the testis, which is important for integrity of the blood-testis barrier. Plays a role in myeloid homeostasis where it regulates the histone methylation state of bone marrow cells and expression of various genes involved in hematopoiesis. May function as a leukemia suppressor. The protein is AT-rich interactive domain-containing protein 4B (Arid4b) of Mus musculus (Mouse).